A 552-amino-acid chain; its full sequence is Putative transport protein HAPS_0158 (552 aa).

Helical transmembrane passes span 4 to 24, 28 to 48, 65 to 85, 95 to 115, and 157 to 177; these read IALT…IGHI, GVSL…HFMT, FGLI…FFAS, AFAV…HKIF, and MGYA…MWLI. 2 RCK C-terminal domains span residues 193 to 275 and 277 to 360; these read DSAT…ILGE and VNVS…IIGN. A run of 6 helical transmembrane segments spans residues 370 to 390, 393 to 413, 438 to 458, 463 to 483, 492 to 512, and 532 to 552; these read MLPI…PIYL, FPVA…LILA, IVLF…NTLL, LAWI…TGLV, YLSL…LAFA, and LVMF…WVAG.

It belongs to the AAE transporter (TC 2.A.81) family. YidE subfamily.

It localises to the cell membrane. This is Putative transport protein HAPS_0158 from Glaesserella parasuis serovar 5 (strain SH0165) (Haemophilus parasuis).